We begin with the raw amino-acid sequence, 742 residues long: Envelope glycoprotein H (742 aa).

The signal sequence occupies residues 1-23; sequence MRPGLPSYLIILAVCLFSHLLSS. Topologically, residues 24-719 are virion surface; it reads RYGAEAVSEP…VVDATDSRLL (696 aa). N-linked (GlcNAc...) asparagine; by host glycans are attached at residues Asn55, Asn62, Asn67, and Asn192. The cysteines at positions 195 and 211 are disulfide-linked. Residues 217-280 form an interaction with gL region; sequence YLIDELRYVK…QTEKHELLVL (64 aa). 3 disulfides stabilise this stretch: Cys330/Cys383, Cys495/Cys522, and Cys571/Cys624. N-linked (GlcNAc...) asparagine; by host glycans are attached at residues Asn641 and Asn700. A helical membrane pass occupies residues 720–740; sequence MMSVYALSAIIGIYLLYRMLK. The Intravirion portion of the chain corresponds to 741–742; sequence TC.

This sequence belongs to the herpesviridae glycoprotein H family. As to quaternary structure, interacts with glycoprotein L (gL); this interaction is necessary for the correct processing and cell surface expression of gH. The heterodimer gH/gL seems to interact with gB trimers during fusion. Forms the envelope pentamer complex (PC) composed of gH, gL, UL128, UL130, and UL131A. The pentamer interacts with host NRP2. Forms the envelope trimer complex composed of gH, gL, and gO. The trimer interacts with host PDGFRA. The trimer also interacts with host EPHA2. The trimer also interacts with host TGFBR3. Interacts with UL116. N-glycosylated, O-glycosylated, and sialylated.

The protein resides in the virion membrane. It localises to the host cell membrane. The protein localises to the host endosome membrane. Its function is as follows. The heterodimer glycoprotein H-glycoprotein L is required for the fusion of viral and plasma membranes leading to virus entry into the host cell. Following initial binding to host receptor, membrane fusion is mediated by the fusion machinery composed of gB and the heterodimer gH/gL. May also be involved in the fusion between the virion envelope and the outer nuclear membrane during virion morphogenesis. In human cytomegalovirus, forms two distincts complexes to mediate viral entry, a trimer and a pentamer at the surface of the virion envelope. The gH-gL-gO trimer is required for infection in fibroblasts by interacting with host PDGFRA, and in glioblastoma cells by interacting with host EPHA2. Thsi trimer may also be required in other cell types using host TGFBR3. The gH-gL-UL128-UL130-UL131A pentamer is essential for viral entry in epithelial, endothelial and myeloid cells via interaction with host NRP2. In Human cytomegalovirus (strain Merlin) (HHV-5), this protein is Envelope glycoprotein H.